The chain runs to 289 residues: Heme oxygenase 1 (289 aa).

Residues M1 to T266 are Cytoplasmic-facing. Residues K18, H25, Y134, and R183 each coordinate heme b. The tract at residues H225–T261 is disordered. 2 positions are modified to phosphoserine: S229 and S242. The segment covering V244 to T261 has biased composition (polar residues). The helical; Anchor for type IV membrane protein transmembrane segment at P267–M289 threads the bilayer.

The protein belongs to the heme oxygenase family. In terms of assembly, homodimer and higher order homooligomer. Oligomerization is crucial for its stability and function in the endoplasmic reticulum. Interacts with FLVCR2; this interaction is potentiated in the presence of heme. Post-translationally, a soluble form arises by proteolytic removal of the membrane anchor.

It is found in the endoplasmic reticulum membrane. It carries out the reaction heme b + 3 reduced [NADPH--hemoprotein reductase] + 3 O2 = biliverdin IXalpha + CO + Fe(2+) + 3 oxidized [NADPH--hemoprotein reductase] + 3 H2O + H(+). Inhibited by metalloporphyrins such as Sn- and Zn-protoporphyrins. Catalyzes the oxidative cleavage of heme at the alpha-methene bridge carbon, released as carbon monoxide (CO), to generate biliverdin IXalpha, while releasing the central heme iron chelate as ferrous iron. Affords protection against programmed cell death and this cytoprotective effect relies on its ability to catabolize free heme and prevent it from sensitizing cells to undergo apoptosis. In terms of biological role, catalyzes the oxidative cleavage of heme at the alpha-methene bridge carbon, released as carbon monoxide (CO), to generate biliverdin IXalpha, while releasing the central heme iron chelate as ferrous iron. This Rattus norvegicus (Rat) protein is Heme oxygenase 1 (Hmox1).